The primary structure comprises 225 residues: Peptidyl-tRNA hydrolase (225 aa).

A tRNA-binding site is contributed by Tyr-14. His-19 (proton acceptor) is an active-site residue. 3 residues coordinate tRNA: Phe-64, Asn-66, and Asn-112. Positions Ala-184–Arg-225 are disordered. Residues Ala-198–Ala-210 are compositionally biased toward low complexity.

This sequence belongs to the PTH family. As to quaternary structure, monomer.

Its subcellular location is the cytoplasm. It carries out the reaction an N-acyl-L-alpha-aminoacyl-tRNA + H2O = an N-acyl-L-amino acid + a tRNA + H(+). In terms of biological role, hydrolyzes ribosome-free peptidyl-tRNAs (with 1 or more amino acids incorporated), which drop off the ribosome during protein synthesis, or as a result of ribosome stalling. Catalyzes the release of premature peptidyl moieties from peptidyl-tRNA molecules trapped in stalled 50S ribosomal subunits, and thus maintains levels of free tRNAs and 50S ribosomes. This chain is Peptidyl-tRNA hydrolase, found in Cereibacter sphaeroides (strain KD131 / KCTC 12085) (Rhodobacter sphaeroides).